The primary structure comprises 192 residues: Peptidyl-tRNA hydrolase (192 aa).

TRNA is bound at residue tyrosine 17. The active-site Proton acceptor is the histidine 22. TRNA contacts are provided by phenylalanine 68, asparagine 70, and asparagine 116.

It belongs to the PTH family. As to quaternary structure, monomer.

Its subcellular location is the cytoplasm. It catalyses the reaction an N-acyl-L-alpha-aminoacyl-tRNA + H2O = an N-acyl-L-amino acid + a tRNA + H(+). Hydrolyzes ribosome-free peptidyl-tRNAs (with 1 or more amino acids incorporated), which drop off the ribosome during protein synthesis, or as a result of ribosome stalling. In terms of biological role, catalyzes the release of premature peptidyl moieties from peptidyl-tRNA molecules trapped in stalled 50S ribosomal subunits, and thus maintains levels of free tRNAs and 50S ribosomes. This Hydrogenovibrio crunogenus (strain DSM 25203 / XCL-2) (Thiomicrospira crunogena) protein is Peptidyl-tRNA hydrolase.